The chain runs to 374 residues: Chaperone protein DnaJ (374 aa).

The J domain maps to 4-68 (DYYDILGVSR…ETRARYDRFG (65 aa)). The segment at 133 to 215 (GGEKQIRITH…CGGNGQAQVT (83 aa)) adopts a CR-type zinc-finger fold. The Zn(2+) site is built by Cys-146, Cys-149, Cys-163, Cys-166, Cys-189, Cys-192, Cys-203, and Cys-206. 4 CXXCXGXG motif repeats span residues 146–153 (CTTCNGSG), 163–170 (CGTCGGAG), 189–196 (CPTCNGKG), and 203–210 (CETCGGNG).

This sequence belongs to the DnaJ family. Homodimer. Requires Zn(2+) as cofactor.

It is found in the cytoplasm. Participates actively in the response to hyperosmotic and heat shock by preventing the aggregation of stress-denatured proteins and by disaggregating proteins, also in an autonomous, DnaK-independent fashion. Unfolded proteins bind initially to DnaJ; upon interaction with the DnaJ-bound protein, DnaK hydrolyzes its bound ATP, resulting in the formation of a stable complex. GrpE releases ADP from DnaK; ATP binding to DnaK triggers the release of the substrate protein, thus completing the reaction cycle. Several rounds of ATP-dependent interactions between DnaJ, DnaK and GrpE are required for fully efficient folding. Also involved, together with DnaK and GrpE, in the DNA replication of plasmids through activation of initiation proteins. This chain is Chaperone protein DnaJ, found in Cyanothece sp. (strain PCC 7425 / ATCC 29141).